A 209-amino-acid chain; its full sequence is Uracil phosphoribosyltransferase (209 aa).

Residues arginine 79, arginine 104, and aspartate 131–serine 139 each bind 5-phospho-alpha-D-ribose 1-diphosphate. Residues isoleucine 194 and glycine 199 to alanine 201 each bind uracil. Residue aspartate 200 participates in 5-phospho-alpha-D-ribose 1-diphosphate binding.

It belongs to the UPRTase family. It depends on Mg(2+) as a cofactor.

It catalyses the reaction UMP + diphosphate = 5-phospho-alpha-D-ribose 1-diphosphate + uracil. It functions in the pathway pyrimidine metabolism; UMP biosynthesis via salvage pathway; UMP from uracil: step 1/1. Allosterically activated by GTP. Its function is as follows. Catalyzes the conversion of uracil and 5-phospho-alpha-D-ribose 1-diphosphate (PRPP) to UMP and diphosphate. This is Uracil phosphoribosyltransferase from Clostridium botulinum (strain Alaska E43 / Type E3).